Here is a 636-residue protein sequence, read N- to C-terminus: 1-phosphatidylinositol 4,5-bisphosphate phosphodiesterase zeta-1 (636 aa).

Positions 35 to 70 (CNTIHVKCIFKDNDRLKQGRITIEEFRTIYRIIAHR) constitute an EF-hand domain. The PI-PLC X-box domain maps to 155 to 299 (QDMTHPLSDY…LKFKILVRNK (145 aa)). Residues histidine 170 and histidine 215 contribute to the active site. Residues 311 to 338 (KGFDKHGQVQECEEEEEAEQEEEENEVR) are disordered. Positions 318 to 345 (QVQECEEEEEAEQEEEENEVRDSEILDI) form a coiled coil. Residues 321–336 (ECEEEEEAEQEEEENE) show a composition bias toward acidic residues. The PI-PLC Y-box domain occupies 375 to 491 (LSDLVIYTKV…GYILKPHFLR (117 aa)). A C2 domain is found at 491–617 (RDGKSIFNPN…KGYRRVPLFS (127 aa)).

Interacts via its C2 domain with PtdIns(3)P and, to a lesser extent, PtdIns(5)P in vitro. The cofactor is Ca(2+). As to expression, expressed specifically in testis.

It localises to the nucleus. It is found in the cytoplasm. The protein resides in the perinuclear region. It carries out the reaction a 1,2-diacyl-sn-glycero-3-phospho-(1D-myo-inositol-4,5-bisphosphate) + H2O = 1D-myo-inositol 1,4,5-trisphosphate + a 1,2-diacyl-sn-glycerol + H(+). The production of the second messenger molecules diacylglycerol (DAG) and inositol 1,4,5-trisphosphate (IP3) is mediated by activated phosphatidylinositol-specific phospholipase C enzymes. In vitro, hydrolyzes PtdIns(4,5)P2 in a Ca(2+)-dependent manner. Triggers intracellular Ca(2+) oscillations in oocytes solely during M phase and is involved in inducing oocyte activation and initiating embryonic development up to the blastocyst stage. Is therefore a strong candidate for the egg-activating soluble sperm factor that is transferred from the sperm into the egg cytoplasm following gamete membrane fusion. May exert an inhibitory effect on phospholipase-C-coupled processes that depend on calcium ions and protein kinase C, including CFTR trafficking and function. In Sus scrofa (Pig), this protein is 1-phosphatidylinositol 4,5-bisphosphate phosphodiesterase zeta-1.